A 407-amino-acid polypeptide reads, in one-letter code: Tryptophan synthase beta chain (407 aa).

Lys-91 carries the post-translational modification N6-(pyridoxal phosphate)lysine.

Belongs to the TrpB family. In terms of assembly, tetramer of two alpha and two beta chains. The cofactor is pyridoxal 5'-phosphate.

It catalyses the reaction (1S,2R)-1-C-(indol-3-yl)glycerol 3-phosphate + L-serine = D-glyceraldehyde 3-phosphate + L-tryptophan + H2O. It functions in the pathway amino-acid biosynthesis; L-tryptophan biosynthesis; L-tryptophan from chorismate: step 5/5. Functionally, the beta subunit is responsible for the synthesis of L-tryptophan from indole and L-serine. The sequence is that of Tryptophan synthase beta chain from Streptococcus pneumoniae (strain P1031).